We begin with the raw amino-acid sequence, 407 residues long: MSQKLVLILNCGSSSLKFSILDPKTGEEKLSGLAEAFYLDDARIKWKLHGEKGNAELGKGAAHSEALNFIVNNIFPLDPTLKDGIVAIGHRIVHGGEKFTSSVIVTDEVVKGIEDAIQFAPLHNPAHLIGIKEAFKIFPHLKDKNVVVFDTAFHQTMPEEAYLYALPYSLYKEHGVRRYGAHGTSHYFVSREAAKRLGVAEDKVNVITCHLGNGGSVSAVRHGQCIDTSMGLTPLEGLVMGTRCGDIDPAIMFYMHDTLGMSVEEINTTLTKKSGLLGLTEVTSDCRFAEDNYDNEDESLRVPAKRAMDVYCYRLAKYIGSYMAVIGERLDAIVFTGGIGENSAHVREITLNHLKLFGYQLDQEKNLAARFGNEGIITADNTPIAMVIPTNEELVIAQDTARLCIKD.

Residue Asn-10 participates in Mg(2+) binding. Residue Lys-17 coordinates ATP. Position 91 (Arg-91) interacts with substrate. Asp-150 functions as the Proton donor/acceptor in the catalytic mechanism. Residues 210–214 (HLGNG), 285–287 (DCR), and 338–342 (GIGEN) each bind ATP. Glu-392 is a binding site for Mg(2+).

This sequence belongs to the acetokinase family. As to quaternary structure, homodimer. Mg(2+) is required as a cofactor. Mn(2+) serves as cofactor.

The protein localises to the cytoplasm. The catalysed reaction is acetate + ATP = acetyl phosphate + ADP. It functions in the pathway metabolic intermediate biosynthesis; acetyl-CoA biosynthesis; acetyl-CoA from acetate: step 1/2. Catalyzes the formation of acetyl phosphate from acetate and ATP. Can also catalyze the reverse reaction. This is Acetate kinase from Mannheimia succiniciproducens (strain KCTC 0769BP / MBEL55E).